We begin with the raw amino-acid sequence, 142 residues long: Small heat shock protein IbpB (142 aa).

The region spanning A26–R137 is the sHSP domain.

It belongs to the small heat shock protein (HSP20) family. In terms of assembly, homodimer. Forms homomultimers of about 100-150 subunits at optimal growth temperatures. Conformation changes to oligomers at high temperatures or high ionic concentrations. The decrease in size of the multimers is accompanied by an increase in chaperone activity.

It is found in the cytoplasm. In terms of biological role, associates with aggregated proteins, together with IbpA, to stabilize and protect them from irreversible denaturation and extensive proteolysis during heat shock and oxidative stress. Aggregated proteins bound to the IbpAB complex are more efficiently refolded and reactivated by the ATP-dependent chaperone systems ClpB and DnaK/DnaJ/GrpE. Its activity is ATP-independent. The chain is Small heat shock protein IbpB from Klebsiella pneumoniae subsp. pneumoniae (strain ATCC 700721 / MGH 78578).